We begin with the raw amino-acid sequence, 618 residues long: DNA mismatch repair protein MutL (618 aa).

The segment covering 366 to 381 (AEPTAAREPATPRYSG) has biased composition (low complexity). The segment at 366–403 (AEPTAAREPATPRYSGGASGGNGGRQSAGGWPHAQPGY) is disordered. The span at 382 to 392 (GASGGNGGRQS) shows a compositional bias: gly residues.

This sequence belongs to the DNA mismatch repair MutL/HexB family.

Its function is as follows. This protein is involved in the repair of mismatches in DNA. It is required for dam-dependent methyl-directed DNA mismatch repair. May act as a 'molecular matchmaker', a protein that promotes the formation of a stable complex between two or more DNA-binding proteins in an ATP-dependent manner without itself being part of a final effector complex. The protein is DNA mismatch repair protein MutL of Salmonella schwarzengrund (strain CVM19633).